Consider the following 414-residue polypeptide: Putative L-lactate dehydrogenase (414 aa).

One can recognise an FMN hydroxy acid dehydrogenase domain in the interval Arg29–Arg406. Residue Tyr55 participates in a 2-oxocarboxylate binding. FMN is bound by residues Ser137 and Gln159. Tyr161 contacts a 2-oxocarboxylate. Thr187 serves as a coordination point for FMN. Arg196 provides a ligand contact to a 2-oxocarboxylate. Lys277 provides a ligand contact to FMN. His301 serves as the catalytic Proton acceptor. Arg304 contacts a 2-oxocarboxylate. Residues Asp332–Met336 and Gly355–Arg356 contribute to the FMN site.

This sequence belongs to the FMN-dependent alpha-hydroxy acid dehydrogenase family. Requires FMN as cofactor.

It catalyses the reaction (S)-lactate + A = pyruvate + AH2. The protein is Putative L-lactate dehydrogenase (lldD) of Mycobacterium tuberculosis (strain ATCC 25618 / H37Rv).